A 193-amino-acid chain; its full sequence is Ribosomal RNA small subunit methyltransferase G (193 aa).

Residues G72, F77, 123–124 (IE), and R137 contribute to the S-adenosyl-L-methionine site.

Belongs to the methyltransferase superfamily. RNA methyltransferase RsmG family.

The protein localises to the cytoplasm. The catalysed reaction is guanosine(527) in 16S rRNA + S-adenosyl-L-methionine = N(7)-methylguanosine(527) in 16S rRNA + S-adenosyl-L-homocysteine. Specifically methylates the N7 position of guanine in position 527 of 16S rRNA. In Wolinella succinogenes (strain ATCC 29543 / DSM 1740 / CCUG 13145 / JCM 31913 / LMG 7466 / NCTC 11488 / FDC 602W) (Vibrio succinogenes), this protein is Ribosomal RNA small subunit methyltransferase G.